The chain runs to 962 residues: Spliceosome associated factor 3, U4/U6 recycling protein (962 aa).

Low complexity predominate over residues 1–21 (MATTAASSASEPEVEPQAGPE). The tract at residues 1 to 92 (MATTAASSAS…EDEWEYDEEE (92 aa)) is disordered. Alanine 2 carries the N-acetylalanine modification. A mediates interaction with PRPF3 region spans residues 2–352 (ATTAASSASE…LVPDLWIRYS (351 aa)). Phosphoserine is present on serine 10. The segment covering 81-92 (AGEDEWEYDEEE) has biased composition (acidic residues). 9 HAT repeats span residues 127–159 (GELSRVRAARQKMSELFPLTEELWLEWLHDEIS), 165–196 (LDREHVYELFERAVKDYICPNIWLEYGQYSVG), 202–238 (GGLEKVRSVFERALSSVGLHMTKGLAIWEAYREFESA), 243–276 (ARLEKVHSLFRRQLAIPLYEMEATFAEYEEWSEE), 325–357 (GDPARIQLIFERALVENCLVPDLWIRYSQYLDR), 360–392 (KVKDLVLSVHSRAVRNCPWTVALWSRYLLAMER), 395–431 (LDHQTISATFENALSAGFIQATDYVEIWQVYLDYLRR), 441–474 (KELEELRSMFTRALEYLQQEVEERFSESGDPSCL), and 488–521 (NNMQKARELWDSIMTRGNAKYANMWLEYYNLERA). Position 216 is a phosphoserine (serine 216). The interval 488–521 (NNMQKARELWDSIMTRGNAKYANMWLEYYNLERA) is required for interaction with USP4. Residues 538-952 (CTSDYPEHVC…VATEAPKMSN (415 aa)) form a necessary and sufficient for U6 snRNA binding region. A coiled-coil region spans residues 559–618 (TLEDWDLAIQKTETRLARVNEQRMKAAEKEAALVQQEEEKAEQRKKVRAEKKALKKKKKT). The span at 591-602 (LVQQEEEKAEQR) shows a compositional bias: basic and acidic residues. The disordered stretch occupies residues 591–696 (LVQQEEEKAE…SLKRDMPKVA (106 aa)). Positions 601-670 (QRKKVRAEKK…KEETELSGKC (70 aa)) are required for nuclear localization. The short motif at 602-609 (RKKVRAEK) is the Nuclear localization signal element. Basic residues predominate over residues 603–618 (KKVRAEKKALKKKKKT). Residues 627–640 (DEDEENEWGEEEEE) show a composition bias toward acidic residues. Serine 651 carries the post-translational modification Phosphoserine. The segment covering 680–696 (KQKEKAASLKRDMPKVA) has biased composition (basic and acidic residues). Residues 704–782 (VTVFVSNLPY…RPMFVSPCVD (79 aa)) form the RRM 1 domain. Serine 795 and serine 852 each carry phosphoserine. The RRM 2 domain occupies 801–878 (HKLFISGLPF…NVIKVAISNP (78 aa)). The segment at 880–962 (QRKVPEKPEV…ADFAKLLLRK (83 aa)) is disordered. Arginine 906 is modified (omega-N-methylarginine).

As to quaternary structure, component of the 7SK snRNP complex at least composed of P-TEFb (composed of CDK9 and CCNT1/cyclin-T1), HEXIM1, HEXIM2, BCDIN3, SART3 proteins and 7SK and U6 snRNAs. Interacts with AGO1 and AGO2. Interacts with PRPF3 and USP4; the interaction with PRPF3 is direct and recruits USP4 to its substrate PRPF3. Interacts with USP15; the interaction is direct. Ubiquitously expressed, with low level of expression in liver, heart and skeletal. Also detected in hematopoietic cells (at protein level).

Its subcellular location is the nucleus. It localises to the nucleoplasm. The protein resides in the cajal body. It is found in the nucleus speckle. The protein localises to the cytoplasm. Functionally, U6 snRNP-binding protein that functions as a recycling factor of the splicing machinery. Promotes the initial reassembly of U4 and U6 snRNPs following their ejection from the spliceosome during its maturation. Also binds U6atac snRNPs and may function as a recycling factor for U4atac/U6atac spliceosomal snRNP, an initial step in the assembly of U12-type spliceosomal complex. The U12-type spliceosomal complex plays a role in the splicing of introns with non-canonical splice sites. May also function as a substrate-targeting factor for deubiquitinases like USP4 and USP15. Recruits USP4 to ubiquitinated PRPF3 within the U4/U5/U6 tri-snRNP complex, promoting PRPF3 deubiquitination and thereby regulating the spliceosome U4/U5/U6 tri-snRNP spliceosomal complex disassembly. May also recruit the deubiquitinase USP15 to histone H2B and mediate histone deubiquitination, thereby regulating gene expression and/or DNA repair. May play a role in hematopoiesis probably through transcription regulation of specific genes including MYC. The protein is Spliceosome associated factor 3, U4/U6 recycling protein of Mus musculus (Mouse).